The primary structure comprises 132 residues: Fluoride-specific ion channel FluC 1 (132 aa).

Helical transmembrane passes span 9–29 (LAAV…LSAL), 35–55 (ASWP…VGYF), 72–89 (LLGT…TMQV), and 100–120 (WGLA…AVHL). Residues glycine 79 and threonine 82 each contribute to the Na(+) site.

It belongs to the fluoride channel Fluc/FEX (TC 1.A.43) family.

The protein resides in the cell membrane. It carries out the reaction fluoride(in) = fluoride(out). With respect to regulation, na(+) is not transported, but it plays an essential structural role and its presence is essential for fluoride channel function. In terms of biological role, fluoride-specific ion channel. Important for reducing fluoride concentration in the cell, thus reducing its toxicity. This chain is Fluoride-specific ion channel FluC 1, found in Mycolicibacterium paratuberculosis (strain ATCC BAA-968 / K-10) (Mycobacterium paratuberculosis).